The following is a 146-amino-acid chain: Universal stress protein MTH_1154 (146 aa).

The protein belongs to the universal stress protein A family.

The protein is Universal stress protein MTH_1154 of Methanothermobacter thermautotrophicus (strain ATCC 29096 / DSM 1053 / JCM 10044 / NBRC 100330 / Delta H) (Methanobacterium thermoautotrophicum).